A 563-amino-acid polypeptide reads, in one-letter code: TSET complex member tstC (563 aa).

Disordered regions lie at residues 146 to 170, 192 to 213, 235 to 298, 376 to 395, and 428 to 563; these read SPHQ…SFIT, NSLS…NNDS, VLNS…NYNN, HPNA…NEFK, and GSAS…FLNF. The segment covering 379-395 has biased composition (basic and acidic residues); it reads AGKEAKEKEKEKENEFK. The span at 428-459 shows a compositional bias: low complexity; sequence GSASSKSSPSTSPLSSSYNPSSPETSENSFSA. Positions 460-473 are enriched in polar residues; that stretch reads TPISDSNSLKNSID. 2 stretches are compositionally biased toward low complexity: residues 474–487 and 507–543; these read NNNN…NNNN and NNSK…SSAA. Over residues 552–563 the composition is skewed to polar residues; that stretch reads NSAKTKMNFLNF.

As to quaternary structure, component of the TSET complex, a heterohexamer composed of tstA, tstB, tstC, tstD, tstE and tstF, which may act in plasma membrane turnover. tstA, tstB, tstC and tstD are likely to be the core complex members with tstE and tstF acting as associated scaffold proteins.

The sequence is that of TSET complex member tstC from Dictyostelium discoideum (Social amoeba).